Here is a 493-residue protein sequence, read N- to C-terminus: Beta-hexosaminidase Amuc_2018 (493 aa).

Positions 1–21 (MARPLPILGGILLSFSPPAEA) are cleaved as a signal peptide. Arginine 122 is a binding site for substrate. Active-site charge relay system residues include aspartate 151 and histidine 214. Cysteine 227 and cysteine 247 together coordinate Zn(2+). A substrate-binding site is contributed by aspartate 278. Residue glutamate 279 is the Charge relay system of the active site. Zn(2+) contacts are provided by cysteine 288 and cysteine 291. Residues tryptophan 345, 373 to 375 (YLD), and 421 to 423 (WAE) each bind substrate.

It belongs to the glycosyl hydrolase 20 family.

It catalyses the reaction Hydrolysis of terminal non-reducing N-acetyl-D-hexosamine residues in N-acetyl-beta-D-hexosaminides.. Its activity is regulated as follows. Significantly inhibited by the addition of sodium dodecyl sulfate (SDS), but not by EDTA, urea, 2-mercaptoethanol or Triton X-100. Strongly inhibited by Cu2(+) ions, in case of which the activity is decreased by 70%. No significant inhibition with Al(3+), Fe(3+), Ca(2+), Cd(2+), Mg(2+), Mn(2+), Ni(2+) and Zn(2+) ions. Strongly inhibited by PugNAc (O-(2-acetamido-2-deoxy-D-glucopyranosylideneamino) N-phenylcarbamate) in the sub-micromolar concentration range. PugNAc at a concentration of 0.5 mM decreases the activity by 50% and the addition of 1 mM PugNAc fully inhibits the enzyme. No significant reduction in the activity by alkylation using N-ethylmaleimide or 2-iodoacetamide. Hydrolyzes terminal GlcNAc residues from terminally unbranched N-glycans and from chitobiose. Hydrolyzes beta-1,6-linked N-acetylglucosamine and beta-1,4-linked N-acetylgalactosamine from pNP-alpha-GalNAc[beta1,3Gal]beta1,6GlcNAc and pNP-beta-GlcNAc-beta1,4-GalNAc substrates, respectively, as well as beta-1,2-linked N-acetylglucosamine units from the non-reducing end of N-glycans. Hydrolyzes GlcNAc residues linked to alpha1,3- or alpha1,6-mannose branch, but has low activity on substrates with more than one GlcNAc residue on one of the mannose branches. Releases terminal GlcNAc moieties from the N-glycopeptide Gly-Glu-Asn-(GlcNAc2Man3GlcNAc2)-Arg with high efficiency. Has moderate hydrolytic activity on the chitobiose moiety of N-glycopeptide substrate Gly-Glu-Asn-(GlcNAc2)-Arg. Does not hydrolyze GlcNAc residues from N-glycan structures bearing a bisecting GlcNAc moiety (beta1,4-linked GlcNAc to the beta1,4-linked core mannose). Potentially capable of cleaving the specific glycoside linkages in the process of mucin degradation in human intestinal tract. Hydrolyzes synthetic substrate pNP-beta-GlcNAc with high activity and pNP-beta-GalNAc to a lesser extent. Does not hydrolyze pNP-beta-glucose, pNP-beta-galactose, pNP-alpha-glucose, pNP-alpha-galactose, pNP-alpha-GlcNAc or pNP-alpha-fucose. This chain is Beta-hexosaminidase Amuc_2018, found in Akkermansia muciniphila (strain ATCC BAA-835 / DSM 22959 / JCM 33894 / BCRC 81048 / CCUG 64013 / CIP 107961 / Muc).